We begin with the raw amino-acid sequence, 455 residues long: Gamma-aminobutyric acid receptor subunit alpha-1 (455 aa).

Residues 1 to 27 (MKKSRGLSDYLWAWTLILSTLSGRSYG) form the signal peptide. The Extracellular portion of the chain corresponds to 28–252 (QPSQDELKDN…FHLKRKIGYF (225 aa)). Asn37 is a glycosylation site (N-linked (GlcNAc...) asparagine). Arg93 contributes to the 4-aminobutanoate binding site. Asn137 carries an N-linked (GlcNAc...) asparagine glycan. Thr156 contributes to the 4-aminobutanoate binding site. Cys165 and Cys179 are oxidised to a cystine. The helical transmembrane segment at 253-273 (VIQTYLPCIMTVILSQVSFWL) threads the bilayer. The Cytoplasmic segment spans residues 274 to 278 (NRESV). A helical membrane pass occupies residues 279–300 (PARTVFGVTTVLTMTTLSISAR). Over 301–310 (NSLPKVAYAT) the chain is Extracellular. A helical transmembrane segment spans residues 311–332 (AMDWFIAVCYAFVFSALIEFAT). Residues 333–420 (VNYFTKRGYA…TFNSVSKIDR (88 aa)) lie on the Cytoplasmic side of the membrane. The helical transmembrane segment at 421–440 (LSRIAFPLLFGIFNLVYWAT) threads the bilayer. Residues 441–455 (YLNREPQLKAPTPHQ) lie on the Extracellular side of the membrane.

This sequence belongs to the ligand-gated ion channel (TC 1.A.9) family. Gamma-aminobutyric acid receptor (TC 1.A.9.5) subfamily. GABRA1 sub-subfamily. In terms of assembly, heteropentamer, formed by a combination of alpha (GABRA1-6), beta (GABRB1-3), gamma (GABRG1-3), delta (GABRD), epsilon (GABRE), rho (GABRR1-3), pi (GABRP) and theta (GABRQ) subunits, each subunit exhibiting distinct physiological and pharmacological properties. Interacts with UBQLN1. Interacts with TRAK1. Interacts with KIF21B. Identified in a complex of 720 kDa composed of LHFPL4, NLGN2, GABRA1, GABRB2, GABRG2 and GABRB3. Interacts with LHFPL4. Interacts with NLGN2. Interacts with SHISA7; interaction leads to the regulation of GABA(A) receptor trafficking, channel deactivation kinetics and pharmacology. Glycosylated. In terms of tissue distribution, expressed in the cerebellum.

Its subcellular location is the postsynaptic cell membrane. It localises to the cell membrane. The protein localises to the cytoplasmic vesicle membrane. It carries out the reaction chloride(in) = chloride(out). Its activity is regulated as follows. Allosterically activated by benzodiazepines, the neuroanesthetic alphaxalone and pentobarbital. Inhibited by the antagonist bicuculline. Potentiated by histamine. Functionally, alpha subunit of the heteropentameric ligand-gated chloride channel gated by Gamma-aminobutyric acid (GABA), a major inhibitory neurotransmitter in the brain. GABA-gated chloride channels, also named GABA(A) receptors (GABAAR), consist of five subunits arranged around a central pore and contain GABA active binding site(s) located at the alpha and beta subunit interface(s). When activated by GABA, GABAARs selectively allow the flow of chloride anions across the cell membrane down their electrochemical gradient. Alpha-1/GABRA1-containing GABAARs are largely synaptic. Chloride influx into the postsynaptic neuron following GABAAR opening decreases the neuron ability to generate a new action potential, thereby reducing nerve transmission. GABAARs containing alpha-1 and beta-2 or -3 subunits exhibit synaptogenic activity; the gamma-2 subunit being necessary but not sufficient to induce rapid synaptic contacts formation. GABAARs function also as histamine receptor where histamine binds at the interface of two neighboring beta subunits and potentiates GABA response. GABAARs containing alpha, beta and epsilon subunits also permit spontaneous chloride channel activity while preserving the structural information required for GABA-gated openings. Alpha-1-mediated plasticity in the orbitofrontal cortex regulates context-dependent action selection. Together with rho subunits, may also control neuronal and glial GABAergic transmission in the cerebellum. The protein is Gamma-aminobutyric acid receptor subunit alpha-1 of Mus musculus (Mouse).